The sequence spans 419 residues: Gamma-glutamyl phosphate reductase (419 aa).

The protein belongs to the gamma-glutamyl phosphate reductase family.

Its subcellular location is the cytoplasm. It carries out the reaction L-glutamate 5-semialdehyde + phosphate + NADP(+) = L-glutamyl 5-phosphate + NADPH + H(+). It participates in amino-acid biosynthesis; L-proline biosynthesis; L-glutamate 5-semialdehyde from L-glutamate: step 2/2. Its function is as follows. Catalyzes the NADPH-dependent reduction of L-glutamate 5-phosphate into L-glutamate 5-semialdehyde and phosphate. The product spontaneously undergoes cyclization to form 1-pyrroline-5-carboxylate. The protein is Gamma-glutamyl phosphate reductase of Azobacteroides pseudotrichonymphae genomovar. CFP2.